The chain runs to 139 residues: Histone H2B.11 (139 aa).

Positions 1 to 39 are enriched in basic and acidic residues; sequence MAPKAEKKPAEKKPVEEKAEKKPKAEKRVPGAKEGGGEK. Residues 1–47 form a disordered region; sequence MAPKAEKKPAEKKPVEEKAEKKPKAEKRVPGAKEGGGEKKGKKKAKK. 2 positions are modified to N6-acetyllysine: Lys-7 and Lys-27. A Glycyl lysine isopeptide (Lys-Gly) (interchain with G-Cter in ubiquitin) cross-link involves residue Lys-135.

It belongs to the histone H2B family. As to quaternary structure, the nucleosome is a histone octamer containing two molecules each of H2A, H2B, H3 and H4 assembled in one H3-H4 heterotetramer and two H2A-H2B heterodimers. The octamer wraps approximately 147 bp of DNA. Can be acetylated to form H2BK6ac and H2BK33ac. In terms of processing, monoubiquitinated by BRE1 to form H2BK143ub1 and deubiquitinated by UBP26. Required for heterochromatic histone H3 di- and trimethylation at H3K4me. May give a specific tag for epigenetic transcriptional activation.

It is found in the nucleus. Its subcellular location is the chromosome. In terms of biological role, core component of nucleosome. Nucleosomes wrap and compact DNA into chromatin, limiting DNA accessibility to the cellular machineries which require DNA as a template. Histones thereby play a central role in transcription regulation, DNA repair, DNA replication and chromosomal stability. DNA accessibility is regulated via a complex set of post-translational modifications of histones, also called histone code, and nucleosome remodeling. The chain is Histone H2B.11 (H2B.11) from Oryza sativa subsp. indica (Rice).